The following is a 103-amino-acid chain: MGKLTLLLLAILVWLQYSLWFGKNGIHDYTRVNDDVAAQQATNAKLKARNDQLFAEIDDLNGGQEALEERARNELSMTRPGETFYRLVPDASKRAQSAGQNNR.

The Cytoplasmic segment spans residues 1 to 3; the sequence is MGK. The helical transmembrane segment at 4–21 threads the bilayer; that stretch reads LTLLLLAILVWLQYSLWF. Topologically, residues 22 to 103 are periplasmic; it reads GKNGIHDYTR…RAQSAGQNNR (82 aa). The stretch at 31–71 forms a coiled coil; sequence RVNDDVAAQQATNAKLKARNDQLFAEIDDLNGGQEALEERA.

It belongs to the FtsB family. As to quaternary structure, part of a complex composed of FtsB, FtsL and FtsQ.

The protein localises to the cell inner membrane. Functionally, essential cell division protein. May link together the upstream cell division proteins, which are predominantly cytoplasmic, with the downstream cell division proteins, which are predominantly periplasmic. The chain is Cell division protein FtsB from Escherichia coli O157:H7.